A 510-amino-acid polypeptide reads, in one-letter code: ATP synthase subunit alpha (510 aa).

Residue 169–176 coordinates ATP; sequence GDRQTGKT.

The protein belongs to the ATPase alpha/beta chains family. As to quaternary structure, F-type ATPases have 2 components, CF(1) - the catalytic core - and CF(0) - the membrane proton channel. CF(1) has five subunits: alpha(3), beta(3), gamma(1), delta(1), epsilon(1). CF(0) has three main subunits: a(1), b(2) and c(9-12). The alpha and beta chains form an alternating ring which encloses part of the gamma chain. CF(1) is attached to CF(0) by a central stalk formed by the gamma and epsilon chains, while a peripheral stalk is formed by the delta and b chains.

The protein localises to the cell inner membrane. It catalyses the reaction ATP + H2O + 4 H(+)(in) = ADP + phosphate + 5 H(+)(out). Functionally, produces ATP from ADP in the presence of a proton gradient across the membrane. The alpha chain is a regulatory subunit. The sequence is that of ATP synthase subunit alpha from Rickettsia conorii (strain ATCC VR-613 / Malish 7).